The sequence spans 329 residues: Mas-related G-protein coupled receptor member X2 (329 aa).

The Extracellular portion of the chain corresponds to 1–33; it reads MDPTTPAWRTESTTMNGNDQALPLLCGKEILIS. The chain crosses the membrane as a helical span at residues 34–54; sequence VFLILFIALVGLVGNGFVLWL. The Cytoplasmic portion of the chain corresponds to 55-63; that stretch reads LGFRMRRNA. A helical membrane pass occupies residues 64-84; sequence FSVYVLSLAGADFLFLCFQII. At 85-96 the chain is on the extracellular side; sequence NCLVYLSNFFCS. Residues 97–117 traverse the membrane as a helical segment; sequence SSINFPSFFTTVMTCAYLAGL. Residues 118-144 are Cytoplasmic-facing; the sequence is SMLSTISTERCLSVLWPIWYRCRRPRH. A helical membrane pass occupies residues 145 to 165; that stretch reads LSAVACVLLWALSLLLSILEG. Residues 166 to 183 lie on the Extracellular side of the membrane; sequence KFCGLFGDGDSGWCQTFD. Residues 184-204 form a helical membrane-spanning segment; it reads LITAAWLIFLFMVLCGSSLAL. At 205-227 the chain is on the cytoplasmic side; that stretch reads LVRILCGSRGLPLTRLYLTILLT. Residues 228–248 traverse the membrane as a helical segment; sequence VLVFLLCGLPFGIQWFLILWI. The Extracellular segment spans residues 249 to 263; that stretch reads WKNSDVLFCHIHPVS. A helical membrane pass occupies residues 264–284; the sequence is VVLSSLNSSANPIIYFFVGSF. Over 285–329 the chain is Cytoplasmic; sequence RKQWQLQQPILKLALQRALQDIAEVDHSEGCFRQGTPEMSRSSLV.

It belongs to the G-protein coupled receptor 1 family. Mas subfamily.

Its subcellular location is the cell membrane. In terms of biological role, mast cell-specific receptor for basic secretagogues, i.e. cationic amphiphilic drugs, as well as endo- or exogenous peptides, consisting of a basic head group and a hydrophobic core. Recognizes and binds small molecules containing a cyclized tetrahydroisoquinoline (THIQ), such as non-steroidal neuromuscular blocking drugs (NMBDs), including tubocurarine and atracurium. In response to these compounds, mediates pseudo-allergic reactions characterized by histamine release, inflammation and airway contraction. The sequence is that of Mas-related G-protein coupled receptor member X2 (MRGPRX2) from Gorilla gorilla gorilla (Western lowland gorilla).